A 123-amino-acid polypeptide reads, in one-letter code: Small ribosomal subunit protein uS12 (123 aa).

Residue D89 is modified to 3-methylthioaspartic acid. The disordered stretch occupies residues G100–K123. Over residues N111–K123 the composition is skewed to basic residues.

It belongs to the universal ribosomal protein uS12 family. As to quaternary structure, part of the 30S ribosomal subunit. Contacts proteins S8 and S17. May interact with IF1 in the 30S initiation complex.

Its function is as follows. With S4 and S5 plays an important role in translational accuracy. In terms of biological role, interacts with and stabilizes bases of the 16S rRNA that are involved in tRNA selection in the A site and with the mRNA backbone. Located at the interface of the 30S and 50S subunits, it traverses the body of the 30S subunit contacting proteins on the other side and probably holding the rRNA structure together. The combined cluster of proteins S8, S12 and S17 appears to hold together the shoulder and platform of the 30S subunit. The chain is Small ribosomal subunit protein uS12 from Pseudomonas fluorescens (strain ATCC BAA-477 / NRRL B-23932 / Pf-5).